The primary structure comprises 271 residues: Phosphate import ATP-binding protein PstB (271 aa).

The ABC transporter domain maps to phenylalanine 25–isoleucine 266. Glycine 57 to serine 64 contributes to the ATP binding site.

The protein belongs to the ABC transporter superfamily. Phosphate importer (TC 3.A.1.7) family. As to quaternary structure, the complex is composed of two ATP-binding proteins (PstB), two transmembrane proteins (PstC and PstA) and a solute-binding protein (PstS).

It is found in the cell membrane. It carries out the reaction phosphate(out) + ATP + H2O = ADP + 2 phosphate(in) + H(+). Its function is as follows. Part of the ABC transporter complex PstSACB involved in phosphate import. Responsible for energy coupling to the transport system. This chain is Phosphate import ATP-binding protein PstB, found in Bacillus cereus (strain ATCC 14579 / DSM 31 / CCUG 7414 / JCM 2152 / NBRC 15305 / NCIMB 9373 / NCTC 2599 / NRRL B-3711).